The following is a 143-amino-acid chain: Large ribosomal subunit protein uL11 (143 aa).

This sequence belongs to the universal ribosomal protein uL11 family. In terms of assembly, part of the ribosomal stalk of the 50S ribosomal subunit. Interacts with L10 and the large rRNA to form the base of the stalk. L10 forms an elongated spine to which L12 dimers bind in a sequential fashion forming a multimeric L10(L12)X complex. One or more lysine residues are methylated.

Forms part of the ribosomal stalk which helps the ribosome interact with GTP-bound translation factors. This is Large ribosomal subunit protein uL11 from Cupriavidus metallidurans (strain ATCC 43123 / DSM 2839 / NBRC 102507 / CH34) (Ralstonia metallidurans).